The sequence spans 183 residues: NADH-quinone oxidoreductase subunit I (183 aa).

4Fe-4S ferredoxin-type domains are found at residues 71–100 (KRDEQGRENCTACGLCALSCPAEAITMKAA) and 117–146 (EIYEINMLRCIFCGLCEEACPKDAIYLTTS). [4Fe-4S] cluster contacts are provided by C80, C83, C86, C90, C126, C129, C132, and C136.

Belongs to the complex I 23 kDa subunit family. NDH-1 is composed of 14 different subunits. Subunits NuoA, H, J, K, L, M, N constitute the membrane sector of the complex. It depends on [4Fe-4S] cluster as a cofactor.

The protein localises to the cell inner membrane. It carries out the reaction a quinone + NADH + 5 H(+)(in) = a quinol + NAD(+) + 4 H(+)(out). In terms of biological role, NDH-1 shuttles electrons from NADH, via FMN and iron-sulfur (Fe-S) centers, to quinones in the respiratory chain. The immediate electron acceptor for the enzyme in this species is believed to be ubiquinone. Couples the redox reaction to proton translocation (for every two electrons transferred, four hydrogen ions are translocated across the cytoplasmic membrane), and thus conserves the redox energy in a proton gradient. This Flavobacterium psychrophilum (strain ATCC 49511 / DSM 21280 / CIP 103535 / JIP02/86) protein is NADH-quinone oxidoreductase subunit I.